The following is a 391-amino-acid chain: Elongation factor Tu (391 aa).

Residues 10–201 (KPHVNIGTIG…AVDSYIPTPE (192 aa)) form the tr-type G domain. Residues 19-26 (GHVDHGKT) are G1. 19-26 (GHVDHGKT) provides a ligand contact to GTP. Thr26 provides a ligand contact to Mg(2+). Residues 55-59 (GITIS) are G2. A G3 region spans residues 76–79 (DCPG). GTP is bound by residues 76-80 (DCPGH) and 131-134 (NKCD). Residues 131–134 (NKCD) are G4. A G5 region spans residues 169 to 171 (SAL).

Belongs to the TRAFAC class translation factor GTPase superfamily. Classic translation factor GTPase family. EF-Tu/EF-1A subfamily. As to quaternary structure, monomer.

It is found in the cytoplasm. It carries out the reaction GTP + H2O = GDP + phosphate + H(+). GTP hydrolase that promotes the GTP-dependent binding of aminoacyl-tRNA to the A-site of ribosomes during protein biosynthesis. The polypeptide is Elongation factor Tu (Brucella canis (strain ATCC 23365 / NCTC 10854 / RM-666)).